We begin with the raw amino-acid sequence, 380 residues long: 1-deoxy-D-xylulose 5-phosphate reductoisomerase (380 aa).

The NADPH site is built by T10, G11, S12, I13, G35, R36, N37, and N121. K122 is a 1-deoxy-D-xylulose 5-phosphate binding site. E123 is an NADPH binding site. A Mn(2+)-binding site is contributed by D147. The 1-deoxy-D-xylulose 5-phosphate site is built by S148, E149, S173, and H196. Residue E149 participates in Mn(2+) binding. Position 202 (G202) interacts with NADPH. 1-deoxy-D-xylulose 5-phosphate contacts are provided by S209, N214, K215, and E218. A Mn(2+)-binding site is contributed by E218.

Belongs to the DXR family. Requires Mg(2+) as cofactor. Mn(2+) serves as cofactor.

It carries out the reaction 2-C-methyl-D-erythritol 4-phosphate + NADP(+) = 1-deoxy-D-xylulose 5-phosphate + NADPH + H(+). The protein operates within isoprenoid biosynthesis; isopentenyl diphosphate biosynthesis via DXP pathway; isopentenyl diphosphate from 1-deoxy-D-xylulose 5-phosphate: step 1/6. Its function is as follows. Catalyzes the NADPH-dependent rearrangement and reduction of 1-deoxy-D-xylulose-5-phosphate (DXP) to 2-C-methyl-D-erythritol 4-phosphate (MEP). This is 1-deoxy-D-xylulose 5-phosphate reductoisomerase from Agathobacter rectalis (strain ATCC 33656 / DSM 3377 / JCM 17463 / KCTC 5835 / VPI 0990) (Eubacterium rectale).